The following is a 240-amino-acid chain: FAS1 domain-containing protein AN1527 (240 aa).

Positions 1 to 24 are cleaved as a signal peptide; sequence MRQLSTTALVLFLFFYCSISTAWS. The FAS1 domain maps to 91–239; sequence EPTISDVLPK…GEVWVIDGVI (149 aa).

The protein localises to the vacuole. In Emericella nidulans (strain FGSC A4 / ATCC 38163 / CBS 112.46 / NRRL 194 / M139) (Aspergillus nidulans), this protein is FAS1 domain-containing protein AN1527.